The following is a 226-amino-acid chain: Ribonuclease 3 (226 aa).

Positions 7 to 129 constitute an RNase III domain; the sequence is LPRLCRTLGY…IIGAIYLDSD (123 aa). Glutamate 42 provides a ligand contact to Mg(2+). Residue aspartate 46 is part of the active site. Positions 115 and 118 each coordinate Mg(2+). Residue glutamate 118 is part of the active site. In terms of domain architecture, DRBM spans 156–226; it reads DAKTLLQEYL…AAQVLELLKK (71 aa).

The protein belongs to the ribonuclease III family. As to quaternary structure, homodimer. Requires Mg(2+) as cofactor.

It localises to the cytoplasm. The enzyme catalyses Endonucleolytic cleavage to 5'-phosphomonoester.. In terms of biological role, digests double-stranded RNA. Involved in the processing of primary rRNA transcript to yield the immediate precursors to the large and small rRNAs (23S and 16S). Processes some mRNAs, and tRNAs when they are encoded in the rRNA operon. Processes pre-crRNA and tracrRNA of type II CRISPR loci if present in the organism. In Shewanella sp. (strain ANA-3), this protein is Ribonuclease 3.